The chain runs to 316 residues: Methionyl-tRNA formyltransferase (316 aa).

112–115 lines the (6S)-5,6,7,8-tetrahydrofolate pocket; that stretch reads SLLP.

Belongs to the Fmt family.

The enzyme catalyses L-methionyl-tRNA(fMet) + (6R)-10-formyltetrahydrofolate = N-formyl-L-methionyl-tRNA(fMet) + (6S)-5,6,7,8-tetrahydrofolate + H(+). Attaches a formyl group to the free amino group of methionyl-tRNA(fMet). The formyl group appears to play a dual role in the initiator identity of N-formylmethionyl-tRNA by promoting its recognition by IF2 and preventing the misappropriation of this tRNA by the elongation apparatus. This chain is Methionyl-tRNA formyltransferase, found in Haemophilus ducreyi (strain 35000HP / ATCC 700724).